The primary structure comprises 246 residues: UPF0246 protein str1967 (246 aa).

It belongs to the UPF0246 family.

The chain is UPF0246 protein str1967 from Streptococcus thermophilus (strain CNRZ 1066).